The chain runs to 163 residues: Large ribosomal subunit protein bL17 (163 aa).

Positions 123–135 (AEASRATRASASK) are enriched in low complexity. The segment at 123–163 (AEASRATRASASKKAAEEAETEEVVEAPAEETATEEAAEEK) is disordered. Residues 140 to 163 (EAETEEVVEAPAEETATEEAAEEK) show a composition bias toward acidic residues.

It belongs to the bacterial ribosomal protein bL17 family. In terms of assembly, part of the 50S ribosomal subunit. Contacts protein L32.

This is Large ribosomal subunit protein bL17 from Corynebacterium glutamicum (strain ATCC 13032 / DSM 20300 / JCM 1318 / BCRC 11384 / CCUG 27702 / LMG 3730 / NBRC 12168 / NCIMB 10025 / NRRL B-2784 / 534).